The sequence spans 304 residues: DCN1-like protein 3 (304 aa).

Disordered regions lie at residues 1-87 (MGQC…EESS) and 284-304 (EVEG…EEQT). Gly-2 carries the N-myristoyl glycine lipid modification. Positions 86–278 (SSLQRLEELF…LFDTFVEWEM (193 aa)) constitute a DCUN1 domain.

In terms of assembly, part of a complex containing DCUN1D3, CUL3 and RBX1. Interacts (via the DCUN1 domain) with the unneddylated cullins: interacts with CUL1, CUL2, CUL3, CUL4A, CUL4B and CUL5; these interactions promote the cullin neddylation and the identity of the cullin dictates the affinity of the interaction. Interacts preferentially with CUL3; this interaction triggers the relocalization of CUL3 to the cell membrane where CUL3 is neddylated. Interacts (via DCUN1 domain) with RBX1. May also interact with regulators or subunits of cullin-RING ligases such as RNF7, ELOB and DDB1; these interactions are bridged by cullins. Interacts (via DCUN1 domain) with CAND1; this interaction is bridged by cullins and strongly inhibits cullin neddylation. These CAND-cullin-DCNL complexes can only be neddylated in the presence of a substrate adapter. Interacts (via DCUN1 domain) with the N-terminally acetylated form of UBE2M and UBE2F. Highest levels of expression are in the testis. Very low levels of expression in the heart, brain, skeletal muscle, kidney, liver, spleen, lung and ovary.

The protein localises to the cell membrane. Its subcellular location is the cytoplasm. It localises to the nucleus. The protein resides in the perinuclear region. Functionally, contributes to the neddylation of all cullins by transferring NEDD8 from N-terminally acetylated NEDD8-conjugating E2s enzyme to different cullin C-terminal domain-RBX complexes and may play a role in the cell cycle progression by regulating the SCF ubiquitin E3 ligase complex, after UV damage. At the cell membrane, can promote and as well inhibit cullins neddylation. This is DCN1-like protein 3 from Mus musculus (Mouse).